We begin with the raw amino-acid sequence, 371 residues long: Protein arginine N-methyltransferase 1 (371 aa).

Positions 50 to 361 (KDYYFDSYAH…DLDFKGQLCE (312 aa)) constitute an SAM-dependent MTase PRMT-type domain. The S-adenosyl-L-methionine site is built by His63, Arg72, Gly96, and Glu118. Arg72 serves as a coordination point for S-adenosyl-L-homocysteine. Residue Glu118 participates in S-adenosyl-L-homocysteine binding. At Lys134 the chain carries N6-succinyllysine. Lys145 participates in a covalent cross-link: Glycyl lysine isopeptide (Lys-Gly) (interchain with G-Cter in ubiquitin). The S-adenosyl-L-homocysteine site is built by Val146 and Glu147. Glu147 contributes to the S-adenosyl-L-methionine binding site. Catalysis depends on residues Glu162 and Glu171. 2 positions are modified to N6-acetyllysine: Lys228 and Lys233. Phosphoserine is present on residues Ser304 and Ser307.

This sequence belongs to the class I-like SAM-binding methyltransferase superfamily. Protein arginine N-methyltransferase family. As to quaternary structure, homodimer. Homooctamer; individual homodimers associates to form a homooctamer. Individual homodimers can associate to form a homohexamer. Heterodimer with PRMT8. Interacts with BTG1, BTG2, NFATC2IP and IFNAR1. Interacts with and methylates CHTOP, thereby enabling the interaction of CHTOP with the 5FMC complex. Interacts with ILF3 and SUPT5H. Interacts with and methylates FOXO1, leading to the nuclear retention of FOXO1 and the stimulation of FOXO1 transcriptional activity. Methylation of FOXO1 is increased upon oxidative stress. Interacts with and probably methylates ATXN2L. Component of the methylosome, a 20S complex containing at least CLNS1A/pICln, PRMT5/SKB1, WDR77/MEP50, PRMT1 and ERH. Interacts with DHX9 (via RGG region). Interacts (via N-terminus) with HABP4. Interacts with MAP3K5/ASK1; the interaction results in MAP3K5 methylation by PRMT1 which inhibits MAP3K5 activation. Interacts with TRIM48; the interaction results in ubiquitination of PRMT1 by TRIM48, leading to PRMT1 proteasomal degradation and activation of MAP3K5. Interacts with GATOR1 complex; this interaction is S-adenosyl-L-methionine (SAM) dependent and is perturbated by SAMTOR in a SAM-sensitive manner. Interacts with GFI1; promoting recognition and binding of MRE11 and TP53BP1 substrates by PRMT1. Polyubiquitinated at Lys-145 by the SCF(FBXL17) complex, leading to its subsequent degradation. Ubiquitination is regulated by acetylation at Lys-228 and Lys-233. Polyubiquitinated by E3 ubiquitin-protein ligase TRIM48, leading to suppression of MAP3K5/ASK1 methylation and subsequent MAP3K5 activation. Post-translationally, acetylation at Lys-228 and Lys-233 regulates ubiquitination by the SCF(FBXL17) complex. Acetylated at Lys-233 by p300/EP300. Deacetylated at Lys-228 and Lys-233 by SIRT1. Widely expressed. Expressed strongly in colorectal cancer cells (at protein level). Expressed strongly in colorectal cancer tissues compared to wild-type colon samples (at protein level). Expressed strongly in colorectal cancer tissues compared to wild-type colon samples.

It is found in the nucleus. Its subcellular location is the nucleoplasm. The protein resides in the cytoplasm. The protein localises to the cytosol. It localises to the lysosome membrane. It catalyses the reaction L-arginyl-[protein] + 2 S-adenosyl-L-methionine = N(omega),N(omega)-dimethyl-L-arginyl-[protein] + 2 S-adenosyl-L-homocysteine + 2 H(+). The enzyme catalyses L-arginyl-[protein] + S-adenosyl-L-methionine = N(omega)-methyl-L-arginyl-[protein] + S-adenosyl-L-homocysteine + H(+). It carries out the reaction N(omega)-methyl-L-arginyl-[protein] + S-adenosyl-L-methionine = N(omega),N(omega)-dimethyl-L-arginyl-[protein] + S-adenosyl-L-homocysteine + H(+). Arginine methyltransferase that methylates (mono and asymmetric dimethylation) the guanidino nitrogens of arginyl residues present in proteins such as ESR1, histone H2, H3 and H4, FMR1, ILF3, HNRNPA1, HNRNPD, NFATC2IP, SUPT5H, TAF15, EWS, HABP4, SERBP1, RBM15, FOXO1, CHTOP, MAP3K5/ASK1, MICU1 and NPRL2. Constitutes the main enzyme that mediates monomethylation and asymmetric dimethylation of histone H4 'Arg-3' (H4R3me1 and H4R3me2a, respectively), a specific tag for epigenetic transcriptional activation. May be involved in the regulation of TAF15 transcriptional activity, act as an activator of estrogen receptor (ER)-mediated transactivation, play a key role in neurite outgrowth and act as a negative regulator of megakaryocytic differentiation, by modulating p38 MAPK pathway. Methylates RBM15, promoting ubiquitination and degradation of RBM15. Methylates MRE11 and TP53BP1, promoting the DNA damage response. Methylates FOXO1 and retains it in the nucleus increasing its transcriptional activity. Methylates CHTOP and this methylation is critical for its 5-hydroxymethylcytosine (5hmC)-binding activity. Methylates MAP3K5/ASK1 at 'Arg-78' and 'Arg-80' which promotes association of MAP3K5 with thioredoxin and negatively regulates MAP3K5 association with TRAF2, inhibiting MAP3K5 stimulation and MAP3K5-induced activation of JNK. Methylates H4R3 in genes involved in glioblastomagenesis in a CHTOP- and/or TET1-dependent manner. Plays a role in regulating alternative splicing in the heart. Methylates NPRL2 at 'Arg-78' leading to inhibition of its GTPase activator activity and then the GATOR1 complex and consequently inducing timely mTORC1 activation under methionine-sufficient conditions. The protein is Protein arginine N-methyltransferase 1 of Homo sapiens (Human).